The following is a 376-amino-acid chain: Neuropeptide receptor 3 (376 aa).

Over 1 to 29 (MEGGRNCVMTVQQWQPEYNDMNQIRAIFS) the chain is Extracellular. The helical transmembrane segment at 30–50 (LLYLLVWVGAIVGNTLVLYVL) threads the bilayer. At 51-66 (TFNQVSLSVRTVFVGC) the chain is on the cytoplasmic side. Residues 67-87 (LAGSDLLMCLFSLPITAISIF) form a helical membrane-spanning segment. Residues 88–89 (SR) lie on the Extracellular side of the membrane. The helical transmembrane segment at 90-110 (VWVFPAIFCKLIGVFQGGTIF) threads the bilayer. A disulfide bond links Cys-98 and Cys-175. The Cytoplasmic portion of the chain corresponds to 111-139 (VSSFTLTVIALDRCVLILRPNQEIVNFPR). The chain crosses the membrane as a helical span at residues 140–160 (AVFIVFCIWLLGYSLALPVGI). The Extracellular segment spans residues 161 to 197 (YSDIAVYDEICGTFCEENWPDFNPDTGRSGIRRAYGL). A helical membrane pass occupies residues 198–218 (SVLVLQFGIPALISSICYWMI). Topologically, residues 219-251 (SRVMSDQLARRRGHNIRPESETKLVNRKTRANR) are cytoplasmic. A helical membrane pass occupies residues 252-272 (MMIVMVVGFVLAWMPFNAVNL). Over 273 to 284 (YRDLFGISKWYS) the chain is Extracellular. The helical transmembrane segment at 285-305 (TVFALCHVCAMCSAVLNPIIY) threads the bilayer. Residues 306–376 (SWFNPQFRQS…NDYRAGDQLL (71 aa)) are Cytoplasmic-facing.

The protein belongs to the G-protein coupled receptor 1 family.

The protein localises to the cell membrane. G-protein coupled receptor for flp-15 neuropeptides. Receptor activation assays suggest binding to predicted flp-15 peptides, GGPQGPLRF-NH2 and RGPSGPLRF-NH2. Likely involved in Gi/Go-coupled signaling pathways. This is Neuropeptide receptor 3 from Caenorhabditis elegans.